A 145-amino-acid polypeptide reads, in one-letter code: Transmembrane protein CCDC163 (145 aa).

The chain crosses the membrane as a helical span at residues 38 to 54 (LIGLCICFFCSSGCIFL).

The protein resides in the membrane. The chain is Transmembrane protein CCDC163 from Homo sapiens (Human).